A 2690-amino-acid polypeptide reads, in one-letter code: Probable polyketide synthase 28 (2690 aa).

One can recognise a Ketosynthase family 3 (KS3) domain in the interval 15–443 (YGDVAVIGIG…GSNVCLILSE (429 aa)). Residues Cys187, His326, and His366 each act as for beta-ketoacyl synthase activity in the active site. Residues 651–684 (GVSADIIVGHSLGELSSSYSSGMIDFETLCHLIY) are acyl/malonyl transferases. Catalysis depends on Ser661, which acts as the For acyl/malonyl transferase activity. Residues 906–934 (NFKSQLTNINNNNNNINNNNNNNNNNNNN) are a coiled coil. The segment at 916 to 946 (NNNNNINNNNNNNNNNNNNNNNNNNNNNNNN) is disordered. The tract at residues 973-1102 (HEKITNEGPS…GNFSLFKHNS (130 aa)) is N-terminal hotdog fold. Residues 973 to 1285 (HEKITNEGPS…CSSVSLANPS (313 aa)) form the PKS/mFAS DH domain. The active-site Proton acceptor; for dehydratase activity is His1014. Residues 1119 to 1285 (NFTTISKHDF…CSSVSLANPS (167 aa)) form a C-terminal hotdog fold region. The active-site Proton donor; for dehydratase activity is the Asp1188. A disordered region spans residues 1401–1429 (LNHHNNSENKNKNNNNNNNSNNNENSNNE). Residues 1412–1429 (KNNNNNNNSNNNENSNNE) are compositionally biased toward low complexity. In terms of domain architecture, Carrier spans 2594–2671 (SDNEFIHSTI…QSIDIIKFGY (78 aa)). Residue Ser2631 is modified to O-(pantetheine 4'-phosphoryl)serine.

It depends on pantetheine 4'-phosphate as a cofactor.

Functionally, probable polyketide synthase. This chain is Probable polyketide synthase 28 (pks28), found in Dictyostelium discoideum (Social amoeba).